The following is a 104-amino-acid chain: Protein MGF 110-2L (104 aa).

Positions 1-31 (MRFFSYLGLLLAGLTSLQGFSTDNLLEEELR) are cleaved as a signal peptide.

The protein belongs to the asfivirus MGF 110 family.

In terms of biological role, plays a role in virus cell tropism, and may be required for efficient virus replication in macrophages. In African swine fever virus (strain Badajoz 1971 Vero-adapted) (Ba71V), this protein is Protein MGF 110-2L.